Reading from the N-terminus, the 118-residue chain is Cytochrome b-c1 complex subunit 7 (118 aa).

An igE-binding. Immunodominant epitope; induces specific IgE antibody production in mice. Causes degranulation of rat basophilic leukemia (RBL) cells and the release of beta-hexosaminidase from them region spans residues 1–32; that stretch reads MVHLTKTLRFINNPGFRKFYYGLQGYNKYGLY.

It belongs to the UQCRB/QCR7 family. In terms of assembly, component of the ubiquinol-cytochrome c oxidoreductase (cytochrome b-c1 complex, complex III, CIII), a multisubunit enzyme composed of 3 respiratory subunits cytochrome b, cytochrome c1 and Rieske protein, 2 core protein subunits, and additional low-molecular weight protein subunits. The complex exists as an obligatory dimer and forms supercomplexes (SCs) in the inner mitochondrial membrane with cytochrome c oxidase (complex IV, CIV).

It is found in the mitochondrion inner membrane. Functionally, component of the ubiquinol-cytochrome c oxidoreductase, a multisubunit transmembrane complex that is part of the mitochondrial electron transport chain which drives oxidative phosphorylation. The respiratory chain contains 3 multisubunit complexes succinate dehydrogenase (complex II, CII), ubiquinol-cytochrome c oxidoreductase (cytochrome b-c1 complex, complex III, CIII) and cytochrome c oxidase (complex IV, CIV), that cooperate to transfer electrons derived from NADH and succinate to molecular oxygen, creating an electrochemical gradient over the inner membrane that drives transmembrane transport and the ATP synthase. The cytochrome b-c1 complex catalyzes electron transfer from ubiquinol to cytochrome c, linking this redox reaction to translocation of protons across the mitochondrial inner membrane, with protons being carried across the membrane as hydrogens on the quinol. In the process called Q cycle, 2 protons are consumed from the matrix, 4 protons are released into the intermembrane space and 2 electrons are passed to cytochrome c. This Dermatophagoides farinae (American house dust mite) protein is Cytochrome b-c1 complex subunit 7.